Here is a 264-residue protein sequence, read N- to C-terminus: tRNA (guanine-N(1)-)-methyltransferase (264 aa).

Residues Gly116 and 136–141 (VGDFVL) contribute to the S-adenosyl-L-methionine site.

This sequence belongs to the RNA methyltransferase TrmD family. As to quaternary structure, homodimer.

The protein resides in the cytoplasm. The enzyme catalyses guanosine(37) in tRNA + S-adenosyl-L-methionine = N(1)-methylguanosine(37) in tRNA + S-adenosyl-L-homocysteine + H(+). Its function is as follows. Specifically methylates guanosine-37 in various tRNAs. The sequence is that of tRNA (guanine-N(1)-)-methyltransferase from Koribacter versatilis (strain Ellin345).